The chain runs to 117 residues: Large ribosomal subunit protein eL18 (117 aa).

Belongs to the eukaryotic ribosomal protein eL18 family.

In Archaeoglobus fulgidus (strain ATCC 49558 / DSM 4304 / JCM 9628 / NBRC 100126 / VC-16), this protein is Large ribosomal subunit protein eL18.